The following is a 783-amino-acid chain: Cilia- and flagella-associated protein 91 (783 aa).

Positions 748–760 are enriched in acidic residues; the sequence is EDFELEEEAESLD. Residues 748–783 are disordered; that stretch reads EDFELEEEAESLDSEVPTVSVSKTSTIKPTQDEGEG. The segment covering 764–776 has biased composition (polar residues); it reads PTVSVSKTSTIKP.

This sequence belongs to the CFAP91 family. Part of a complex containing MYCBP, AKAP1 and PRKAR2B. Interacts with MYCBP and AKAP1. Interacts with CFAP61. Post-translationally, phosphorylated by PKA. In terms of tissue distribution, expressed in the testis, in cells involved in spermatogenesis.

The protein resides in the cytoplasm. Its subcellular location is the mitochondrion. The protein localises to the cytoskeleton. It is found in the cilium axoneme. Functionally, involved in sperm flagellum axonemal organization and function. May regulate cilium motility through its role in the assembly of the axonemal radial spokes. This chain is Cilia- and flagella-associated protein 91, found in Mus musculus (Mouse).